A 148-amino-acid polypeptide reads, in one-letter code: Large ribosomal subunit protein bL9 (148 aa).

The protein belongs to the bacterial ribosomal protein bL9 family.

Binds to the 23S rRNA. The chain is Large ribosomal subunit protein bL9 from Clostridium perfringens (strain ATCC 13124 / DSM 756 / JCM 1290 / NCIMB 6125 / NCTC 8237 / Type A).